Consider the following 428-residue polypeptide: MRLLCAAFRARFGPVGGAKHRLENGCSFNKRMVMAKKRVVVLYGGRADEHSISCISTAGVLGAMDTERFEPIPVGITKDGKWIINGEDPRGWNLDGGELPTVKITPESRPVMLDPSRGQDGFFIGEPSHINSADSGFGTSFVSMSDPEMHHVLTSLGHVDAVLPVLHGPYGEDGTVQGLLEMMGVPYVGCGVFASAACMDKHYTKVVLDAAGIPTAPGVTVDARNFTAADVLAEIEDAGLTYPLFVKPSRAGSSFGVTKVEKADDRETQQDRLAAAIATAGEHDWKVLVEQGIDGREIECAVLCPKAGDEPEASWPGEIVLDHQNDDQFYDFDSKYMDASASHVEVPANLPVSVLEDVRDVARRAFKAVDGAGLSRVDTFVTPDGTVMVNEINTMPGFTPISMYPKAWDATGVSYTELITRLIEGVLR.

An ATP-grasp domain is found at 205–424 (KVVLDAAGIP…YTELITRLIE (220 aa)). 237 to 299 (DAGLTYPLFV…EQGIDGREIE (63 aa)) contacts ATP. Mg(2+) contacts are provided by Asp378, Glu391, and Asn393.

This sequence belongs to the D-alanine--D-alanine ligase family. The cofactor is Mg(2+). Mn(2+) serves as cofactor.

The protein localises to the cytoplasm. The catalysed reaction is 2 D-alanine + ATP = D-alanyl-D-alanine + ADP + phosphate + H(+). It participates in cell wall biogenesis; peptidoglycan biosynthesis. Cell wall formation. This chain is D-alanine--D-alanine ligase, found in Bifidobacterium longum (strain NCC 2705).